The chain runs to 203 residues: Ribosomal RNA large subunit methyltransferase E (203 aa).

S-adenosyl-L-methionine-binding residues include G51, W53, D69, D85, and D109. K149 acts as the Proton acceptor in catalysis.

This sequence belongs to the class I-like SAM-binding methyltransferase superfamily. RNA methyltransferase RlmE family.

The protein resides in the cytoplasm. It carries out the reaction uridine(2552) in 23S rRNA + S-adenosyl-L-methionine = 2'-O-methyluridine(2552) in 23S rRNA + S-adenosyl-L-homocysteine + H(+). Its function is as follows. Specifically methylates the uridine in position 2552 of 23S rRNA at the 2'-O position of the ribose in the fully assembled 50S ribosomal subunit. This chain is Ribosomal RNA large subunit methyltransferase E, found in Methanoculleus marisnigri (strain ATCC 35101 / DSM 1498 / JR1).